The sequence spans 298 residues: Acetyl-coenzyme A carboxylase carboxyl transferase subunit beta (298 aa).

The disordered stretch occupies residues 1–21 (MNQEVKSGKVLSPSTPWTQRP). The region spanning 41–298 (PTIECPECHA…RLVSKLMNLP (258 aa)) is the CoA carboxyltransferase N-terminal domain. 4 residues coordinate Zn(2+): C45, C48, C64, and C67. The C4-type zinc-finger motif lies at 45–67 (CPECHALVTRTAISFNAYVCPQC).

It belongs to the AccD/PCCB family. In terms of assembly, acetyl-CoA carboxylase is a heterohexamer composed of biotin carboxyl carrier protein (AccB), biotin carboxylase (AccC) and two subunits each of ACCase subunit alpha (AccA) and ACCase subunit beta (AccD). Zn(2+) serves as cofactor.

The protein resides in the cytoplasm. It carries out the reaction N(6)-carboxybiotinyl-L-lysyl-[protein] + acetyl-CoA = N(6)-biotinyl-L-lysyl-[protein] + malonyl-CoA. Its pathway is lipid metabolism; malonyl-CoA biosynthesis; malonyl-CoA from acetyl-CoA: step 1/1. Its function is as follows. Component of the acetyl coenzyme A carboxylase (ACC) complex. Biotin carboxylase (BC) catalyzes the carboxylation of biotin on its carrier protein (BCCP) and then the CO(2) group is transferred by the transcarboxylase to acetyl-CoA to form malonyl-CoA. This chain is Acetyl-coenzyme A carboxylase carboxyl transferase subunit beta, found in Acinetobacter baumannii (strain AYE).